The sequence spans 401 residues: Phosphoglycerate kinase (401 aa).

Substrate contacts are provided by residues D24–N26, R40, H63–R66, R122, and R155. ATP-binding positions include K206, G297, E328, and G357–S360.

This sequence belongs to the phosphoglycerate kinase family. As to quaternary structure, monomer.

Its subcellular location is the cytoplasm. The enzyme catalyses (2R)-3-phosphoglycerate + ATP = (2R)-3-phospho-glyceroyl phosphate + ADP. It functions in the pathway carbohydrate degradation; glycolysis; pyruvate from D-glyceraldehyde 3-phosphate: step 2/5. The sequence is that of Phosphoglycerate kinase from Synechococcus sp. (strain CC9605).